The primary structure comprises 978 residues: Translation initiation factor IF-2 (978 aa).

Disordered regions lie at residues 107–129 (AEAP…NLEL) and 146–387 (QEEE…HRVQ). Positions 146–169 (QEEELSERRRQREEQEARSREASE) are enriched in basic and acidic residues. Low complexity predominate over residues 170–186 (KAAAVAAEAAEAAAAQA). The segment covering 215 to 259 (AEKEQHLAKEKGLAREKELAESKARAAEDVVRAADLGDRRRKAES) has biased composition (basic and acidic residues). Composition is skewed to low complexity over residues 295 to 326 (KPAA…AGAG) and 349 to 361 (PTRG…GAGR). Residues 375 to 386 (GSSDRDRDDHRV) are compositionally biased toward basic and acidic residues. The 170-residue stretch at 478-647 (PRAPVVTVMG…LLQAEVLELK (170 aa)) folds into the tr-type G domain. A G1 region spans residues 487-494 (GHVDHGKT). 487 to 494 (GHVDHGKT) lines the GTP pocket. The segment at 512–516 (GITQH) is G2. The interval 533–536 (DTPG) is G3. GTP is bound by residues 533 to 537 (DTPGH) and 587 to 590 (NKID). Residues 587-590 (NKID) form a G4 region. A G5 region spans residues 623-625 (SAK).

It belongs to the TRAFAC class translation factor GTPase superfamily. Classic translation factor GTPase family. IF-2 subfamily.

It is found in the cytoplasm. Its function is as follows. One of the essential components for the initiation of protein synthesis. Protects formylmethionyl-tRNA from spontaneous hydrolysis and promotes its binding to the 30S ribosomal subunits. Also involved in the hydrolysis of GTP during the formation of the 70S ribosomal complex. The chain is Translation initiation factor IF-2 from Albidiferax ferrireducens (strain ATCC BAA-621 / DSM 15236 / T118) (Rhodoferax ferrireducens).